We begin with the raw amino-acid sequence, 239 residues long: Succinate dehydrogenase [ubiquinone] iron-sulfur subunit (239 aa).

The 76-residue stretch at 24 to 99 (AEAKFSVHPI…NANIITIYPL (76 aa)) folds into the 2Fe-2S ferredoxin-type domain. [2Fe-2S] cluster-binding residues include Cys-63, Cys-68, Cys-71, and Cys-83. Residues 142–172 (DRSELNGIYECILCACCSASCPSYWWNHDKY) enclose the 4Fe-4S ferredoxin-type domain. [4Fe-4S] cluster is bound by residues Cys-152, Cys-155, and Cys-158. Residue Cys-162 coordinates [3Fe-4S] cluster. An a ubiquinone-binding site is contributed by Trp-167. Residues Cys-209 and Cys-215 each contribute to the [3Fe-4S] cluster site. Cys-219 serves as a coordination point for [4Fe-4S] cluster.

It belongs to the succinate dehydrogenase/fumarate reductase iron-sulfur protein family. As to quaternary structure, component of complex II composed of four subunits: a flavoprotein (FP), an iron-sulfur protein (IP), and a cytochrome b composed of a large and a small subunit. [2Fe-2S] cluster is required as a cofactor. Requires [3Fe-4S] cluster as cofactor. [4Fe-4S] cluster serves as cofactor.

The protein localises to the mitochondrion inner membrane. The enzyme catalyses a quinone + succinate = fumarate + a quinol. Its pathway is carbohydrate metabolism; tricarboxylic acid cycle; fumarate from succinate (eukaryal route): step 1/1. Iron-sulfur protein (IP) subunit of succinate dehydrogenase (SDH) that is involved in complex II of the mitochondrial electron transport chain and is responsible for transferring electrons from succinate to ubiquinone (coenzyme Q). The protein is Succinate dehydrogenase [ubiquinone] iron-sulfur subunit (SDH2) of Porphyra purpurea (Red seaweed).